We begin with the raw amino-acid sequence, 332 residues long: Tsukubadiene synthase (332 aa).

Mg(2+)-binding residues include aspartate 75 and glutamate 80. Positions 75–80 (DDHLDE) match the DDXXXE motif motif. Arginine 165 contacts substrate. Positions 212, 216, and 220 each coordinate Mg(2+). The SXXXSXXXE motif motif lies at 212 to 220 (SDLHSFQLE). Substrate is bound at residue 298-299 (RY).

Belongs to the terpene synthase family. Requires Mg(2+) as cofactor.

It carries out the reaction (2E,6E,10E)-geranylgeranyl diphosphate = tsukubadiene + diphosphate. In terms of biological role, catalyzes the formation of the 5-9-5 ring skeleton (3S,6S,11R,14S)-tsukubadiene from geranylgeranyl diphosphate (GGPP) via a 1,11-cyclization and a 10Re,14Re-cyclization. This Streptomyces tsukubensis (strain DSM 42081 / NBRC 108919 / NRRL 18488 / 9993) protein is Tsukubadiene synthase.